We begin with the raw amino-acid sequence, 47 residues long: Delta-stichotoxin-Hcr1d (47 aa).

3 disulfides stabilise this stretch: Cys-3–Cys-43, Cys-5–Cys-33, and Cys-26–Cys-44.

The protein belongs to the sea anemone sodium channel inhibitory toxin family. Type II subfamily.

It localises to the secreted. The protein resides in the nematocyst. Functionally, binds to site 3 of voltage-gated sodium channels and inhibits the inactivation process. This Radianthus crispa (Leathery sea anemone) protein is Delta-stichotoxin-Hcr1d.